Reading from the N-terminus, the 187-residue chain is Large ribosomal subunit protein uL22A (187 aa).

The protein belongs to the universal ribosomal protein uL22 family. In terms of assembly, component of the large ribosomal subunit (LSU). Mature yeast ribosomes consist of a small (40S) and a large (60S) subunit. The 40S small subunit contains 1 molecule of ribosomal RNA (18S rRNA) and at least 33 different proteins. The large 60S subunit contains 3 rRNA molecules (25S, 5.8S and 5S rRNA) and at least 46 different proteins. uL22 is associated with the polypeptide exit tunnel.

It localises to the cytoplasm. In terms of biological role, component of the ribosome, a large ribonucleoprotein complex responsible for the synthesis of proteins in the cell. The small ribosomal subunit (SSU) binds messenger RNAs (mRNAs) and translates the encoded message by selecting cognate aminoacyl-transfer RNA (tRNA) molecules. The large subunit (LSU) contains the ribosomal catalytic site termed the peptidyl transferase center (PTC), which catalyzes the formation of peptide bonds, thereby polymerizing the amino acids delivered by tRNAs into a polypeptide chain. The nascent polypeptides leave the ribosome through a tunnel in the LSU and interact with protein factors that function in enzymatic processing, targeting, and the membrane insertion of nascent chains at the exit of the ribosomal tunnel. This chain is Large ribosomal subunit protein uL22A (rpl1701), found in Schizosaccharomyces pombe (strain 972 / ATCC 24843) (Fission yeast).